Consider the following 123-residue polypeptide: Nitrogenase-stabilizing/protective protein NifW (123 aa).

The protein belongs to the NifW family. In terms of assembly, homotrimer; associates with NifD.

May protect the nitrogenase Fe-Mo protein from oxidative damage. The sequence is that of Nitrogenase-stabilizing/protective protein NifW from Rhodopseudomonas palustris (strain HaA2).